The following is a 294-amino-acid chain: Elongation factor Ts (294 aa).

Residues 80 to 83 (TDFV) are involved in Mg(2+) ion dislocation from EF-Tu.

This sequence belongs to the EF-Ts family.

It localises to the cytoplasm. Associates with the EF-Tu.GDP complex and induces the exchange of GDP to GTP. It remains bound to the aminoacyl-tRNA.EF-Tu.GTP complex up to the GTP hydrolysis stage on the ribosome. In Listeria monocytogenes serotype 4b (strain CLIP80459), this protein is Elongation factor Ts.